Reading from the N-terminus, the 75-residue chain is MHTCPRCDSKKGEVMSKSPVEGAWEVYQCQTCFFTWRSCEPESITNPEKYNPAFKIDPKETETAIEVPAVPERKA.

Its function is as follows. Involved in the non-oxidative decarboxylation and detoxification of phenolic derivatives under both aerobic and anaerobic conditions, however the precise biochemical function of BsdD in metabolism of phenolic acid is unknown. This chain is Protein BsdD, found in Bacillus subtilis (strain 168).